Here is a 228-residue protein sequence, read N- to C-terminus: Vesicle transport protein SEC20 (228 aa).

Topologically, residues 1-199 are cytoplasmic; sequence MAAPQDVHVR…LITKYNRREL (199 aa). Residues 37 to 90 are a coiled coil; it reads LSALTELNTKVKEKFQQLRHRIQDLEQLAKEQDKESEKQLLLQEVENHKKQMLS. A helical; Anchor for type IV membrane protein membrane pass occupies residues 200–220; the sequence is TDKLLIFLALALFLATVLYIV. The Lumenal segment spans residues 221-228; the sequence is KKRLFPFL.

This sequence belongs to the SEC20 family. Component of a SNARE complex consisting of STX18, USE1L, BNIP1/SEC20L and SEC22B. Interacts directly with STX18, RINT1/TIP20L and NAPA. Interacts with ZW10 through RINT1. Interacts with BCL2. Interacts with RNF186. Interacts with RNF185. Interacts with SQSTM1; increased by 'Lys-63'-linked polyubiquitination of BNIP1. As to quaternary structure, (Microbial infection) Interacts with adenovirus E1B 19K protein; plays a role in the suppression of cell apoptosis by the viral protein. Polyubiquitinated. 'Lys-63'-linked polyubiquitination by RNF185 increases the interaction with the autophagy receptor SQSTM1. Undergoes 'Lys-29'- and 'Lys-63'-linked polyubiquitination by RNF186 that may regulate BNIP1 localization to the mitochondrion. In terms of tissue distribution, isoform 1 is highly expressed in heart, brain, liver skeletal muscle and pancreas. Isoform 3 is moderately expressed in placenta, lung and kidney. Isoform 4 is highly expressed in testis and small intestine.

The protein resides in the endoplasmic reticulum membrane. It is found in the mitochondrion membrane. Functionally, as part of a SNARE complex may be involved in endoplasmic reticulum membranes fusion and be required for the maintenance of endoplasmic reticulum organization. Also plays a role in apoptosis. It is for instance required for endoplasmic reticulum stress-induced apoptosis. As a substrate of RNF185 interacting with SQSTM1, might also be involved in mitochondrial autophagy. The chain is Vesicle transport protein SEC20 (BNIP1) from Homo sapiens (Human).